Reading from the N-terminus, the 87-residue chain is Precursor of CEP8 (87 aa).

The signal sequence occupies residues 1 to 29 (MAKALFFNFCISLLIIAILVSHEIIPTEA). Positions 30–72 (RHLRTHRKSIKNSTLTVHEGAGGLRTGGGSVKTDISKEEHGVD) are excised as a propeptide. The N-linked (GlcNAc...) asparagine glycan is linked to asparagine 41. Residues 41–87 (NSTLTVHEGAGGLRTGGGSVKTDISKEEHGVDEFRPTTPGNSPGIGH) are disordered. The span at 49–59 (GAGGLRTGGGS) shows a compositional bias: gly residues. Basic and acidic residues predominate over residues 63–75 (DISKEEHGVDEFR). Hydroxyproline occurs at positions 76, 79, and 83.

Belongs to the C-terminally encoded plant signaling peptide (CEP) family. Interacts with CEP receptors (e.g. CEPR1 and CEPR2). Post-translationally, the mature small signaling peptide is generated by proteolytic processing of the longer precursor. As to expression, expressed in lateral root primordia and in lateral roots excluding the meristem region. Also present in the aerial tissues, such as leaf petioles and the shoot apex region.

It localises to the secreted. It is found in the extracellular space. The protein resides in the apoplast. Functionally, extracellular signaling peptide that may regulate primary root growth rate and systemic nitrogen (N)-demand signaling. Mediates up-regulation of genes involved in N uptake and assimilation pathways. The protein is Precursor of CEP8 of Arabidopsis thaliana (Mouse-ear cress).